Reading from the N-terminus, the 94-residue chain is Cell division topological specificity factor (94 aa).

This sequence belongs to the MinE family.

Functionally, prevents the cell division inhibition by proteins MinC and MinD at internal division sites while permitting inhibition at polar sites. This ensures cell division at the proper site by restricting the formation of a division septum at the midpoint of the long axis of the cell. This Hamiltonella defensa subsp. Acyrthosiphon pisum (strain 5AT) protein is Cell division topological specificity factor.